Here is a 1699-residue protein sequence, read N- to C-terminus: Genome polyprotein (1699 aa).

A compositionally biased stretch (low complexity) spans 1-19; the sequence is MKMASNDASAAAVVNSNND. The segment at 1 to 78 is disordered; the sequence is MKMASNDASA…PPPPPNGEDE (78 aa). The tract at residues 1–116 is interaction with host MAP1LC3A/LC3; it reads MKMASNDASA…AFSVPPLNQR (116 aa). The segment covering 46–74 has biased composition (pro residues); the sequence is QPPPRETPQRPPRPPTPELVKKIPPPPPN. The interaction with NTPase stretch occupies residues 117–330; it reads ENRDAKEPLT…APLLGDYELQ (214 aa). The segment at 233–330 is interaction with NS4; sequence RPYQDWNRKP…APLLGDYELQ (98 aa). 2 host ER membrane association regions span residues 250–281 and 292–330; these read KLKK…RPLN and TFAG…YELQ. The tract at residues 331–509 is interaction with NS1-2, NS4 and homooligomerization; that stretch reads GPEDLAVELV…GKTHLARELA (179 aa). An SF3 helicase domain is found at 465-632; the sequence is LARIAAARSL…EKAKRDFPGQ (168 aa). Position 495–502 (495–502) interacts with ATP; sequence GKPGIGKT. The important for mitochondrion targeting stretch occupies residues 586–691; sequence AIIITTNLAN…ASGLLHERLD (106 aa). Residues 764 to 770 form a functions as endoplasmic reticulum export signal region; sequence YTLESDG. The tract at residues 801 to 850 is host membrane association; sequence RIRYYVKCVQEALYSIIQIAGAAFVTTRIVKRMNIQDLWSKPQVEDTEDT. The interval 843–894 is disordered; sequence QVEDTEDTANKDGCPKPKDDEEFVVSSDDIKTEGKKGKNKTGRGKKHTAFSS. Residues 850-861 are compositionally biased toward basic and acidic residues; it reads TANKDGCPKPKD. Positions 879 to 890 are enriched in basic residues; sequence GKNKTGRGKKHT. The segment at 899 to 904 is acidic; it reads DEEYDE. Tyrosine 902 is subject to O-(5'-phospho-RNA)-tyrosine. The tract at residues 992 to 1008 is interaction with host EIF4G; sequence WADDDRSVDYNEKLDFE. The 181-residue stretch at 1009–1189 folds into the Peptidase C37 domain; the sequence is APPSIWSRIV…QGSEGEATLE (181 aa). Catalysis depends on for 3CLpro activity residues histidine 1038, glutamate 1062, and cysteine 1147. The region spanning 1425 to 1546 is the RdRp catalytic domain; it reads KYHYDADYSR…STDINLNPEK (122 aa). Positions 1429, 1431, 1533, and 1534 each coordinate Mg(2+).

As to quaternary structure, homodimer. Homooligomer. Interacts with NTPase; this interaction increases the proapoptotic activity of the NTPase and is crucial for the formation of the viral replication complex. Interacts with NS4; this interaction is crucial for the formation of the viral replication complex. Interacts (via N-terminus) with host VAPA. Interacts with host MAP1LC3A/LC3; this interaction does not seem to be linked to host autophagy, but rather plays a role in the formation of viral factories. In terms of assembly, homooligomer. Interacts with NS1-2; this interaction increases the proapoptotic activity of the NTPase and is crucial for the formation of the viral replication complex. Interacts with NS4; this interaction increases the proapoptotic activity of the NTPase. Homodimer. Monomer; in solution. As to quaternary structure, interacts with NTPase; this interaction increases the proapoptotic activity of the NTPase. Interacts with NS1-2; this interaction is crucial for the formation of the viral replication complex. In terms of assembly, monomer. Interacts with the RNA-directed RNA polymerase; this interaction induces the multimerization of the RdRp and enhances its activity. Interacts with host IEF4G1; this interaction plays a role in translation of viral proteins. Homohexamer; also forms fibrous hexameric oligomer. Interacts with the viral genome-linked protein; this interaction induces the multimerization of the RdRp and enhances its activity. It depends on Mg(2+) as a cofactor. Requires Mn(2+) as cofactor. Specific enzymatic cleavages in vivo yield mature proteins. 3CLpro is first autocatalytically cleaved, then processes the whole polyprotein. NS1/2-3 and NS3-4 sites are cleaved rapidly and NS4-5, NS5-6, and NS6-7 sites are processed subsequently and less efficiently. Post-translationally, VPg is uridylylated by the polymerase and is covalently attached to the 5'-end of the polyadenylated genomic and subgenomic RNAs. This uridylylated form acts as a nucleotide-peptide primer for the polymerase. In terms of processing, cleaved by host CASP3/caspase 3 at 18-22 h.p.i. The cleavage allows NS1 secretion, which is essential for intestinal infection and resistance to IFN-lambda.

It is found in the host endoplasmic reticulum membrane. It localises to the secreted. Its subcellular location is the host mitochondrion. The protein resides in the host Golgi apparatus membrane. The protein localises to the host cytoplasm. It is found in the host perinuclear region. The catalysed reaction is a ribonucleoside 5'-triphosphate + H2O = a ribonucleoside 5'-diphosphate + phosphate + H(+). It catalyses the reaction Endopeptidase with a preference for cleavage when the P1 position is occupied by Glu-|-Xaa and the P1' position is occupied by Gly-|-Yaa.. The enzyme catalyses RNA(n) + a ribonucleoside 5'-triphosphate = RNA(n+1) + diphosphate. In terms of biological role, induces the proliferation of the host smooth ER membranes forming long tubular structures. These remodeled membranes probably form the viral factories that contain the replication complex. May play a role in viral replication by interacting with host VAPA, a vesicle-associated membrane protein that plays a role in SNARE-mediated vesicle fusion. This interaction may target replication complex to intracellular membranes. Functionally, displays NTPase activity, but no helicase activity. Displays RNA chaperone-like activity and destabilizes dsRNA. Induces the formation of convoluted membranes derived from the host ER. These remodeled membranes probably form the viral factories that contain the replication complex. Initiates host cell death by targeting the mitochondrial outer membrane, leading to the permeabilization of mitochondria, programmed host cell death and viral egress. Externalization of host cardiolipin seems to be involved in the process. Probably plays a role in preventing the assembly of host stress granules. Its function is as follows. Probable key protein responsible for the formation of membrane alterations by the virus. Induces the formation of convoluted membranes derived from the host ER. These remodeled membranes probably form the viral factories that contain the replication complex. May play a role in targeting replication complex to intracellular membranes. Viral genome-linked protein is covalently linked to the 5'-end of the positive-strand, negative-strand genomic RNAs and subgenomic RNA. Acts as a genome-linked replication primer. May recruit ribosome to viral RNA thereby promoting viral proteins translation. Interacts with host translation initiation complex to allow the translation of viral proteins. Induces the formation of aggregates of RNA-directed RNA polymerase in the presence of RNA. Through its interaction with the viral RNA-directed RNA polymerase, plays a crucial role in enhancing the polymerase activity. In terms of biological role, processes the polyprotein. 3CLpro-RdRp is first released by autocleavage, then all other proteins are cleaved. May cleave polyadenylate-binding protein thereby inhibiting cellular translation. Functionally, replicates genomic and antigenomic RNA by recognizing replications specific signals. Also transcribes a subgenomic mRNA by initiating RNA synthesis internally on antigenomic RNA. This sgRNA codes for structural proteins. Catalyzes the covalent attachment VPg with viral RNAs. In Lordsdale virus (strain GII/Human/United Kingdom/Lordsdale/1993) (Human enteric calicivirus), this protein is Genome polyprotein.